The chain runs to 1170 residues: Integrin alpha-2 (1170 aa).

Positions 1–18 are cleaved as a signal peptide; sequence PLQLVLVFSQGILNCCVA. The Extracellular segment spans residues 19–1121; that stretch reads YNVGLPKAKI…KPHEKVEVPT (1103 aa). 2 FG-GAP repeats span residues 23 to 81 and 90 to 150; these read LPKA…TTTC and TSMS…LRTS. Cysteine 72 and cysteine 81 are oxidised to a cystine. 3 N-linked (GlcNAc...) asparagine glycosylation sites follow: asparagine 94, asparagine 101, and asparagine 332. The region spanning 177–354 is the VWFA domain; that stretch reads WDAVKNFLEK…TIGEQIFSIE (178 aa). 5 FG-GAP repeats span residues 355–409, 412–464, 466–528, 529–587, and 591–653; these read GTVQ…LIFS, AFEQ…ENGN, TVIQ…ILNW, HQFL…MIRL, and QKIL…FTPK. 3 N-linked (GlcNAc...) asparagine glycosylation sites follow: asparagine 421, asparagine 449, and asparagine 464. Positions 472–474 match the Cell attachment site motif; sequence RGD. Residues aspartate 488, asparagine 490, aspartate 492, aspartate 496, aspartate 552, asparagine 554, aspartate 556, aspartate 560, aspartate 616, asparagine 618, aspartate 620, and aspartate 624 each coordinate Ca(2+). Cysteine 669 and cysteine 726 are oxidised to a cystine. Asparagine 688 and asparagine 748 each carry an N-linked (GlcNAc...) asparagine glycan. Intrachain disulfides connect cysteine 778-cysteine 784 and cysteine 854-cysteine 865. N-linked (GlcNAc...) asparagine glycosylation occurs at asparagine 945. Cystine bridges form between cysteine 1008–cysteine 1039 and cysteine 1044–cysteine 1049. Residues asparagine 1063 and asparagine 1070 are each glycosylated (N-linked (GlcNAc...) asparagine). A helical membrane pass occupies residues 1122–1143; that stretch reads GVIVGSVIAGILLLLALVAILW. Residues 1144–1170 lie on the Cytoplasmic side of the membrane; that stretch reads KLGFFKRKYEKMAKNPDETDETTELNS. A GFFKR motif motif is present at residues 1146–1150; sequence GFFKR.

It belongs to the integrin alpha chain family. Heterodimer of an alpha and a beta subunit. Alpha-2 associates with beta-1. Interacts with HPS5 and RAB21.

It localises to the membrane. Integrin alpha-2/beta-1 is a receptor for laminin, collagen, collagen C-propeptides, fibronectin and E-cadherin. It recognizes the proline-hydroxylated sequence G-F-P-G-E-R in collagen. It is responsible for adhesion of platelets and other cells to collagens, modulation of collagen and collagenase gene expression, force generation and organization of newly synthesized extracellular matrix. The chain is Integrin alpha-2 (ITGA2) from Bos taurus (Bovine).